A 311-amino-acid chain; its full sequence is Urease accessory protein UreD 3 (311 aa).

The protein belongs to the UreD family. UreD, UreF and UreG form a complex that acts as a GTP-hydrolysis-dependent molecular chaperone, activating the urease apoprotein by helping to assemble the nickel containing metallocenter of UreC. The UreE protein probably delivers the nickel.

Its subcellular location is the cytoplasm. In terms of biological role, required for maturation of urease via the functional incorporation of the urease nickel metallocenter. This chain is Urease accessory protein UreD 3, found in Methylorubrum populi (strain ATCC BAA-705 / NCIMB 13946 / BJ001) (Methylobacterium populi).